Reading from the N-terminus, the 761-residue chain is Elongation factor G, mitochondrial (761 aa).

The transit peptide at 1–33 directs the protein to the mitochondrion; sequence MTSVLRGVLKTHLPRTLTLPRCARNFQTTTFLR. The 282-residue stretch at 66 to 347 folds into the tr-type G domain; sequence TRLRNIGISA…SVVDYLPQPN (282 aa). GTP contacts are provided by residues 75 to 82, 146 to 150, and 200 to 203; these read AHIDSGKT, DTPGH, and NKMD.

The protein belongs to the TRAFAC class translation factor GTPase superfamily. Classic translation factor GTPase family. EF-G/EF-2 subfamily.

It localises to the mitochondrion. It functions in the pathway protein biosynthesis; polypeptide chain elongation. Its function is as follows. Mitochondrial GTPase that catalyzes the GTP-dependent ribosomal translocation step during translation elongation. During this step, the ribosome changes from the pre-translocational (PRE) to the post-translocational (POST) state as the newly formed A-site-bound peptidyl-tRNA and P-site-bound deacylated tRNA move to the P and E sites, respectively. Catalyzes the coordinated movement of the two tRNA molecules, the mRNA and conformational changes in the ribosome. The polypeptide is Elongation factor G, mitochondrial (Candida dubliniensis (strain CD36 / ATCC MYA-646 / CBS 7987 / NCPF 3949 / NRRL Y-17841) (Yeast)).